The primary structure comprises 317 residues: Acetyl-coenzyme A carboxylase carboxyl transferase subunit alpha (317 aa).

In terms of domain architecture, CoA carboxyltransferase C-terminal spans 39-293 (KLEGKAQEAL…GNAIAEAMGS (255 aa)).

It belongs to the AccA family. As to quaternary structure, acetyl-CoA carboxylase is a heterohexamer composed of biotin carboxyl carrier protein (AccB), biotin carboxylase (AccC) and two subunits each of ACCase subunit alpha (AccA) and ACCase subunit beta (AccD).

Its subcellular location is the cytoplasm. It carries out the reaction N(6)-carboxybiotinyl-L-lysyl-[protein] + acetyl-CoA = N(6)-biotinyl-L-lysyl-[protein] + malonyl-CoA. It functions in the pathway lipid metabolism; malonyl-CoA biosynthesis; malonyl-CoA from acetyl-CoA: step 1/1. Its function is as follows. Component of the acetyl coenzyme A carboxylase (ACC) complex. First, biotin carboxylase catalyzes the carboxylation of biotin on its carrier protein (BCCP) and then the CO(2) group is transferred by the carboxyltransferase to acetyl-CoA to form malonyl-CoA. This Azorhizobium caulinodans (strain ATCC 43989 / DSM 5975 / JCM 20966 / LMG 6465 / NBRC 14845 / NCIMB 13405 / ORS 571) protein is Acetyl-coenzyme A carboxylase carboxyl transferase subunit alpha.